We begin with the raw amino-acid sequence, 343 residues long: Putative mediator of RNA polymerase II transcription subunit 4 (343 aa).

A coiled-coil region spans residues 86 to 125 (LKKLEKHQKIQKEITEIQKEIEEKDKLISTLALNLKDIES). The segment at 247–343 (ISSPFSIGGN…DEESEEVEWD (97 aa)) is disordered. Positions 271 to 316 (QQQQQQQQQPQQQLSQSQQSQQQTESELQPIQSILQPPQQLNIDLD) are enriched in low complexity. Residues 317-343 (LNPDLDSSGDDDDEDDDDEESEEVEWD) are compositionally biased toward acidic residues.

Belongs to the Mediator complex subunit 4 family. As to quaternary structure, component of the Mediator complex.

Its subcellular location is the nucleus. Its function is as follows. Component of the Mediator complex, a coactivator involved in the regulated transcription of nearly all RNA polymerase II-dependent genes. Mediator functions as a bridge to convey information from gene-specific regulatory proteins to the basal RNA polymerase II transcription machinery. Mediator is recruited to promoters by direct interactions with regulatory proteins and serves as a scaffold for the assembly of a functional preinitiation complex with RNA polymerase II and the general transcription factors. The chain is Putative mediator of RNA polymerase II transcription subunit 4 (med4) from Dictyostelium discoideum (Social amoeba).